Reading from the N-terminus, the 239-residue chain is Dephospho-CoA kinase (239 aa).

One can recognise a DPCK domain in the interval 3–206 (IIGLTGSIAS…GGEGGEPAAG (204 aa)). Residue 11–16 (ASGKST) coordinates ATP. Positions 197-239 (GGEGGEPAAGSSAHHGAGSVDPGAGPCDGPGAAPEAERRGGDR) are disordered. The segment covering 204-230 (AAGSSAHHGAGSVDPGAGPCDGPGAAP) has biased composition (low complexity).

The protein belongs to the CoaE family.

Its subcellular location is the cytoplasm. The catalysed reaction is 3'-dephospho-CoA + ATP = ADP + CoA + H(+). The protein operates within cofactor biosynthesis; coenzyme A biosynthesis; CoA from (R)-pantothenate: step 5/5. Functionally, catalyzes the phosphorylation of the 3'-hydroxyl group of dephosphocoenzyme A to form coenzyme A. In Symbiobacterium thermophilum (strain DSM 24528 / JCM 14929 / IAM 14863 / T), this protein is Dephospho-CoA kinase.